Reading from the N-terminus, the 1017-residue chain is Nonsense-mediated mRNA decay factor SMG5 (1017 aa).

Ser2 is subject to N-acetylserine. Residues Ser2 and Ser423 each carry the phosphoserine modification. Disordered stretches follow at residues 406 to 562 (GENP…PSEA) and 597 to 640 (TEPN…CRNE). Over residues 448–467 (KSRKHSRLSCLRRRRRHHPP) the composition is skewed to basic residues. Residues 486–496 (DSAQASDGSDS) are compositionally biased toward low complexity. Positions 620 to 629 (ASEDGSESEG) are enriched in acidic residues. Positions 798-842 (AQSEQESLLQQAQAQFRMAEEEARRNRLMRDMAQLRLQLEVSQLE) form a coiled coil. The PINc domain occupies 873–996 (RQLATSGRFI…GPMQAALQAA (124 aa)).

Interacts with TERT, PPP2CA and SMG1. Part of a complex that contains SMG1, SMG5, SMG7, PPP2CA, a short isoform of UPF3A (isoform UPF3AS, but not isoform UPF3AL) and phosphorylated UPF1. Not detected in complexes that contain unphosphorylated UPF1.

The protein resides in the cytoplasm. It is found in the nucleus. Plays a role in nonsense-mediated mRNA decay. Does not have RNase activity by itself. Promotes dephosphorylation of UPF1. Together with SMG7 is thought to provide a link to the mRNA degradation machinery involving exonucleolytic pathways, and to serve as an adapter for UPF1 to protein phosphatase 2A (PP2A), thereby triggering UPF1 dephosphorylation. Necessary for TERT activity. This chain is Nonsense-mediated mRNA decay factor SMG5, found in Mus musculus (Mouse).